The primary structure comprises 227 residues: ATP-dependent Clp protease proteolytic subunit 1 (227 aa).

The Nucleophile role is filled by S124. The active site involves H149.

This sequence belongs to the peptidase S14 family. Fourteen ClpP subunits assemble into 2 heptameric rings which stack back to back to give a disk-like structure with a central cavity, resembling the structure of eukaryotic proteasomes.

The protein resides in the cytoplasm. The catalysed reaction is Hydrolysis of proteins to small peptides in the presence of ATP and magnesium. alpha-casein is the usual test substrate. In the absence of ATP, only oligopeptides shorter than five residues are hydrolyzed (such as succinyl-Leu-Tyr-|-NHMec, and Leu-Tyr-Leu-|-Tyr-Trp, in which cleavage of the -Tyr-|-Leu- and -Tyr-|-Trp bonds also occurs).. In terms of biological role, cleaves peptides in various proteins in a process that requires ATP hydrolysis. Has a chymotrypsin-like activity. Plays a major role in the degradation of misfolded proteins. The protein is ATP-dependent Clp protease proteolytic subunit 1 of Rhodopirellula baltica (strain DSM 10527 / NCIMB 13988 / SH1).